The chain runs to 81 residues: ATP synthase subunit c, chloroplastic (81 aa).

2 helical membrane-spanning segments follow: residues 3-23 (PLVFAASVIAAGLAVGLASIG) and 57-77 (LAFMEALTIYGLVVALALLFA).

This sequence belongs to the ATPase C chain family. In terms of assembly, F-type ATPases have 2 components, F(1) - the catalytic core - and F(0) - the membrane proton channel. F(1) has five subunits: alpha(3), beta(3), gamma(1), delta(1), epsilon(1). F(0) has four main subunits: a(1), b(1), b'(1) and c(10-14). The alpha and beta chains form an alternating ring which encloses part of the gamma chain. F(1) is attached to F(0) by a central stalk formed by the gamma and epsilon chains, while a peripheral stalk is formed by the delta, b and b' chains.

It localises to the plastid. The protein resides in the chloroplast thylakoid membrane. In terms of biological role, f(1)F(0) ATP synthase produces ATP from ADP in the presence of a proton or sodium gradient. F-type ATPases consist of two structural domains, F(1) containing the extramembraneous catalytic core and F(0) containing the membrane proton channel, linked together by a central stalk and a peripheral stalk. During catalysis, ATP synthesis in the catalytic domain of F(1) is coupled via a rotary mechanism of the central stalk subunits to proton translocation. Key component of the F(0) channel; it plays a direct role in translocation across the membrane. A homomeric c-ring of between 10-14 subunits forms the central stalk rotor element with the F(1) delta and epsilon subunits. The chain is ATP synthase subunit c, chloroplastic from Atropa belladonna (Belladonna).